The following is a 132-amino-acid chain: Ribosome-binding factor A (132 aa).

The protein belongs to the RbfA family. In terms of assembly, monomer. Binds 30S ribosomal subunits, but not 50S ribosomal subunits or 70S ribosomes.

The protein localises to the cytoplasm. Functionally, one of several proteins that assist in the late maturation steps of the functional core of the 30S ribosomal subunit. Associates with free 30S ribosomal subunits (but not with 30S subunits that are part of 70S ribosomes or polysomes). Required for efficient processing of 16S rRNA. May interact with the 5'-terminal helix region of 16S rRNA. This Treponema denticola (strain ATCC 35405 / DSM 14222 / CIP 103919 / JCM 8153 / KCTC 15104) protein is Ribosome-binding factor A.